We begin with the raw amino-acid sequence, 327 residues long: Probable cytosolic iron-sulfur protein assembly protein CIAO1 homolog (327 aa).

7 WD repeats span residues 3–42 (GHED…WICK), 48–87 (GHQR…FECN), 92–131 (GHEN…EYEC), 137–176 (SHTQ…WSCC), 181–220 (GHES…NQEG), 239–278 (YHDR…DRNQ), and 290–327 (AHSM…PAEE).

This sequence belongs to the WD repeat CIA1 family.

In terms of biological role, essential component of the cytosolic iron-sulfur (Fe/S) protein assembly machinery. Required for the maturation of extramitochondrial Fe/S proteins. The protein is Probable cytosolic iron-sulfur protein assembly protein CIAO1 homolog of Nematostella vectensis (Starlet sea anemone).